Here is a 353-residue protein sequence, read N- to C-terminus: Deoxyhypusine synthase (353 aa).

NAD(+) contacts are provided by residues 90 to 94 (SNLIS), 116 to 118 (TAG), E122, and D228. Position 121-122 (121-122 (EE)) interacts with spermidine. D233 provides a ligand contact to spermidine. G275 is a binding site for NAD(+). H280 is a binding site for spermidine. Residue 300–301 (TA) coordinates NAD(+). Spermidine is bound by residues 306–308 (GSD) and 315–321 (EAVSWGK). The active-site Nucleophile is the K321. 334-335 (EA) serves as a coordination point for NAD(+).

It belongs to the deoxyhypusine synthase family. As to quaternary structure, homotetramer. The cofactor is NAD(+).

It carries out the reaction [eIF5A protein]-L-lysine + spermidine = [eIF5A protein]-deoxyhypusine + propane-1,3-diamine. It functions in the pathway protein modification; eIF5A hypusination. Catalyzes the NAD-dependent oxidative cleavage of spermidine and the subsequent transfer of the butylamine moiety of spermidine to the epsilon-amino group of a specific lysine residue of the eIF-5A precursor protein to form the intermediate deoxyhypusine residue. The sequence is that of Deoxyhypusine synthase (dys-1) from Neurospora crassa (strain ATCC 24698 / 74-OR23-1A / CBS 708.71 / DSM 1257 / FGSC 987).